The sequence spans 88 residues: uncharacterized protein (88 aa).

This is an uncharacterized protein from Archaeoglobus fulgidus (strain ATCC 49558 / DSM 4304 / JCM 9628 / NBRC 100126 / VC-16).